The chain runs to 369 residues: Thyroid hormone receptor beta (369 aa).

Residues 1–14 (MSGYIPSYLDKDEL) form a modulating region. The Zn(2+) site is built by cysteine 15, cysteine 18, cysteine 32, cysteine 35, cysteine 53, cysteine 59, cysteine 69, and cysteine 72. 2 NR C4-type zinc fingers span residues 15–35 (CVVC…CEGC) and 53–77 (CKYE…FKKC). Residues 15–89 (CVVCGDKATG…VGMATDLVLD (75 aa)) constitute a DNA-binding region (nuclear receptor). Residues 125–369 (EEWELIKIVT…PPLFLEVFED (245 aa)) enclose the NR LBD domain. 3,3',5-triiodo-L-thyronine-binding residues include arginine 190, asparagine 239, and histidine 343. L-thyroxine is bound by residues arginine 190, asparagine 239, and histidine 343.

The protein belongs to the nuclear hormone receptor family. NR1 subfamily.

The protein resides in the nucleus. Its function is as follows. Nuclear hormone receptor that can act as a repressor or activator of transcription. High affinity receptor for thyroid hormones, including triiodothyronine and thyroxine. The polypeptide is Thyroid hormone receptor beta (THRB) (Cairina moschata (Muscovy duck)).